The primary structure comprises 66 residues: Putative inactive (E)-beta-ocimene synthase, chloroplastic (66 aa).

The transit peptide at 1 to 25 (MAAHNLCFNSAFVCNVHHQKTQHFP) directs the protein to the chloroplast.

This sequence belongs to the terpene synthase family. Tpsb subfamily. As to expression, expressed exclusively in flowers.

It is found in the plastid. It localises to the chloroplast. The protein is Putative inactive (E)-beta-ocimene synthase, chloroplastic (TPS02) of Arabidopsis thaliana (Mouse-ear cress).